Reading from the N-terminus, the 479-residue chain is Anaerobic nitric oxide reductase flavorubredoxin (479 aa).

The interval 30–210 (LRGSSYNSYL…PFSRLVTPKI (181 aa)) is zinc metallo-hydrolase. Fe cation contacts are provided by histidine 79, glutamate 81, aspartate 83, histidine 147, aspartate 166, and histidine 227. The 140-residue stretch at 254 to 393 (ITIFYDTMSN…LCRQHGRDIA (140 aa)) folds into the Flavodoxin-like domain. Residues 260-264 (TMSNN) and 342-369 (AFGSHGWSGGAVDRLSTRLQDAGFEMSL) contribute to the FMN site. The 52-residue stretch at 423–474 (GPKMQCSVCQWIYDPALGEPLQDVAPGTPWSDVPDNFLCPECSLGKDVFDVL) folds into the Rubredoxin-like domain. Residues cysteine 428, cysteine 431, cysteine 461, and cysteine 464 each contribute to the Fe cation site.

It in the N-terminal section; belongs to the zinc metallo-hydrolase group 3 family. In terms of assembly, homotetramer. Fe cation is required as a cofactor. Requires FMN as cofactor.

The protein resides in the cytoplasm. The protein operates within nitrogen metabolism; nitric oxide reduction. Anaerobic nitric oxide reductase; uses NADH to detoxify nitric oxide (NO), protecting several 4Fe-4S NO-sensitive enzymes. Has at least 2 reductase partners, only one of which (NorW, flavorubredoxin reductase) has been identified. NO probably binds to the di-iron center; electrons enter from the NorW at rubredoxin and are transferred sequentially to the FMN center and the di-iron center. Also able to function as an aerobic oxygen reductase. The polypeptide is Anaerobic nitric oxide reductase flavorubredoxin (Salmonella arizonae (strain ATCC BAA-731 / CDC346-86 / RSK2980)).